Here is a 289-residue protein sequence, read N- to C-terminus: ATP synthase gamma chain (289 aa).

The protein belongs to the ATPase gamma chain family. F-type ATPases have 2 components, CF(1) - the catalytic core - and CF(0) - the membrane proton channel. CF(1) has five subunits: alpha(3), beta(3), gamma(1), delta(1), epsilon(1). CF(0) has three main subunits: a, b and c.

It localises to the cell inner membrane. Functionally, produces ATP from ADP in the presence of a proton gradient across the membrane. The gamma chain is believed to be important in regulating ATPase activity and the flow of protons through the CF(0) complex. This chain is ATP synthase gamma chain, found in Azobacteroides pseudotrichonymphae genomovar. CFP2.